The following is a 487-amino-acid chain: E3 ubiquitin-protein ligase TRIM50 (487 aa).

The RING-type zinc finger occupies 16–57 (CPICLEVFKEPLMLQCGHSYCKGCLVSLSCHLDAELRCPVCR). The B box-type zinc finger occupies 84-125 (PEPKVCVHHRNPLSLFCEKDQELICGLCGLLGSHQHHPVTPV). Residues cysteine 89, histidine 92, cysteine 111, and histidine 117 each coordinate Zn(2+). Coiled-coil stretches lie at residues 125–169 (VSTV…NESD) and 204–235 (LVASLDMQLEQAQGTRERLAQAECVLEQFGNE). Residues 276–475 (DIKLTVWKRL…LPMVLPPPSG (200 aa)) form the B30.2/SPRY domain. Lysine 373 is subject to N6-acetyllysine. Positions 468–487 (MVLPPPSGPGPLSPEQPTKL) are disordered. Residues 469-481 (VLPPPSGPGPLSP) are compositionally biased toward pro residues.

This sequence belongs to the TRIM/RBCC family. In terms of assembly, can form dimers and trimers. Interacts with several E2 ubiquitin-conjugating enzymes, including UBE2L6, UBE2E1, UBE2E3. No interaction with UBE2H. Interacts with BECN1. Interacts with SQSTM1. Interacts with NLRP3. Post-translationally, auto-ubiquitinated. Acetylated by EP300 and KAT2B. HDAC6 drives TRIM50 deacetylation. Acetylation antagonizes with TRIM50 ubiquitination.

It is found in the cytoplasm. The enzyme catalyses S-ubiquitinyl-[E2 ubiquitin-conjugating enzyme]-L-cysteine + [acceptor protein]-L-lysine = [E2 ubiquitin-conjugating enzyme]-L-cysteine + N(6)-ubiquitinyl-[acceptor protein]-L-lysine.. Functionally, E3 ubiquitin-protein ligase that ubiquitinates Beclin-1/BECN1 in a 'Lys-63'-dependent manner enhancing its binding to ULK1. In turn, promotes starvation-induced autophagy activation. Also interacts with p62/SQSTM1 protein and thereby induces the formation and the autophagy clearance of aggresome-associated polyubiquitinated proteins through HDAC6 interaction. Also promotes NLRP3 inflammasome activation by directly inducing NLRP3 oligomerization independent of its E3 ligase function. The protein is E3 ubiquitin-protein ligase TRIM50 of Homo sapiens (Human).